Reading from the N-terminus, the 885-residue chain is Alanine--tRNA ligase (885 aa).

Zn(2+)-binding residues include H564, H568, C676, and H680.

It belongs to the class-II aminoacyl-tRNA synthetase family. Zn(2+) is required as a cofactor.

The protein resides in the cytoplasm. It catalyses the reaction tRNA(Ala) + L-alanine + ATP = L-alanyl-tRNA(Ala) + AMP + diphosphate. Its function is as follows. Catalyzes the attachment of alanine to tRNA(Ala) in a two-step reaction: alanine is first activated by ATP to form Ala-AMP and then transferred to the acceptor end of tRNA(Ala). Also edits incorrectly charged Ser-tRNA(Ala) and Gly-tRNA(Ala) via its editing domain. This Brucella anthropi (strain ATCC 49188 / DSM 6882 / CCUG 24695 / JCM 21032 / LMG 3331 / NBRC 15819 / NCTC 12168 / Alc 37) (Ochrobactrum anthropi) protein is Alanine--tRNA ligase.